The primary structure comprises 110 residues: Nucleoid-associated protein Tola_2216 (110 aa).

It belongs to the YbaB/EbfC family. In terms of assembly, homodimer.

It localises to the cytoplasm. Its subcellular location is the nucleoid. Functionally, binds to DNA and alters its conformation. May be involved in regulation of gene expression, nucleoid organization and DNA protection. This chain is Nucleoid-associated protein Tola_2216, found in Tolumonas auensis (strain DSM 9187 / NBRC 110442 / TA 4).